Here is a 501-residue protein sequence, read N- to C-terminus: Dipeptide and tripeptide permease A (501 aa).

Residues 1 to 21 (MSTANKKPTESVSLNAFKQPK) lie on the Cytoplasmic side of the membrane. A helical membrane pass occupies residues 22–44 (AFYLIFSIELWERFGYYGLQGIM). Topologically, residues 45–59 (AVYLVKQLGMSEADS) are periplasmic. A helical transmembrane segment spans residues 60-80 (ITLFSSFSALVYGLVAIGGWL). Residues 81 to 89 (GDKILGTKR) are Cytoplasmic-facing. A helical membrane pass occupies residues 90–110 (VIMLGAVVLAIGYALVAWSGH). Position 111 (Asp-111) is a topological domain, periplasmic. A helical transmembrane segment spans residues 112 to 132 (AGIVYMGMAAIAVGNGLFKAN). Residues 133-153 (PSSLLSTCYAKDDPRLDGAFT) lie on the Cytoplasmic side of the membrane. A helical transmembrane segment spans residues 154-174 (MYYMSVNIGSFFSMLATPWLA). The Periplasmic segment spans residues 175–178 (ARYG). Residues 179-199 (WSTAFALSVVGMLITVVNFAF) form a helical membrane-spanning segment. The Cytoplasmic segment spans residues 200–219 (CQRWVKSYGSKPDFEPINFR). Residues 220-240 (NLLLTIVGIVVLIAVATWLLH) form a helical membrane-spanning segment. At 241-246 (NQDIAR) the chain is on the periplasmic side. A helical transmembrane segment spans residues 247 to 267 (MVLGVIALGIVIIFGKEAFSM). Over 268–274 (HGAARRK) the chain is Cytoplasmic. A helical membrane pass occupies residues 275–295 (MIVAFILMLQAIIFFVLYSQM). Residues 296–320 (PTSLNFFAIRNVEHSILGIAFEPEQ) lie on the Periplasmic side of the membrane. The chain crosses the membrane as a helical span at residues 321 to 341 (YQALNPFWIITGSPILAAIYN). Over 342–352 (RMGDTLPMPMK) the chain is Cytoplasmic. Residues 353 to 373 (FAIGMVLCSGAFLILPLGAKF) traverse the membrane as a helical segment. At 374–383 (ANDAGIVSVN) the chain is on the periplasmic side. The chain crosses the membrane as a helical span at residues 384–404 (WLIASYGLQSIGELMISGLGL). Residues 405–414 (AMVAQLVPQR) lie on the Cytoplasmic side of the membrane. The chain crosses the membrane as a helical span at residues 415–435 (LMGFIMGSWFLTTAGANIIGG). The Periplasmic segment spans residues 436–459 (YVANLMAVPSDVTDPLMSLEVYGR). Residues 460–480 (VFMQIGIATAVIAVLMLLTAP) form a helical membrane-spanning segment. At 481–501 (KLNRMTQDDDTAEKGSKAATV) the chain is on the cytoplasmic side.

Belongs to the major facilitator superfamily. Proton-dependent oligopeptide transporter (POT/PTR) (TC 2.A.17) family. DtpA subfamily.

It is found in the cell inner membrane. Functionally, proton-dependent permease that transports di- and tripeptides. The protein is Dipeptide and tripeptide permease A of Salmonella typhi.